The primary structure comprises 67 residues: Peptide Hp1036 (67 aa).

The signal sequence occupies residues 1–23 (MKTQFAILLITLVLFQMFSQSDA). Phe-36 carries the post-translational modification Phenylalanine amide. The propeptide occupies 40-67 (GLNDLSDLDELFDGEISEADVDFLREIM).

This sequence belongs to the non-disulfide-bridged peptide (NDBP) superfamily. Short antimicrobial peptide (group 4) family. In terms of tissue distribution, expressed by the venom gland.

It is found in the secreted. The protein resides in the target cell membrane. In terms of biological role, amphipathic peptide with antibacterial activities. Shows antiviral activities against the herpes simplex virus type-1. It potently inhibits the initial infection by provoking the rupture of viral envelop and the dissociation of proteins from the virions (EC(50) is 0.43 uM). It also effectively inhibits viral attachment (EC(50) is 2.87 uM), viral entry (EC(50) is 4.29 uM) and viral proliferation after infection (EC(50) is 7.86). Morever, it enters mammalian tested cells (Vero) and reduces the intracellular infectivity. This is Peptide Hp1036 from Heterometrus petersii (Asian forest scorpion).